The sequence spans 214 residues: Osteoclast-stimulating factor 1 (214 aa).

The residue at position 2 (Ser2) is an N-acetylserine. Residues 12-71 form the SH3 domain; it reads GQVKVFRALYTFEPRTPDELYFEEGDIIYITDMSDTNWWKGTSKGRTGLIPSNYVAEQAE. ANK repeat units lie at residues 72–101, 105–135, and 139–168; these read SIDNPLHEAAKRGNLSWLRECLDNRVGVNG, AGSTALYWACHGGHKDIVDMLFTQPNIELNQ, and LGDTALHAAAWKGYADIVQLLLAKGARTDL. The residue at position 200 (Thr200) is a Phosphothreonine. Phosphoserine occurs at positions 202 and 213.

As to quaternary structure, interacts with SRC and SMN1. Interacts with FASLG.

It localises to the cytoplasm. Induces bone resorption, acting probably through a signaling cascade which results in the secretion of factor(s) enhancing osteoclast formation and activity. The polypeptide is Osteoclast-stimulating factor 1 (OSTF1) (Sus scrofa (Pig)).